We begin with the raw amino-acid sequence, 269 residues long: Cell cycle regulator CcrZ (269 aa).

Residues phenylalanine 39, histidine 76, tryptophan 77, methionine 78, and glycine 80 each contribute to the ATP site. Positions 164–171 (HCDVNHNN) match the Brenner's motif [HXDhX3N] motif. The Proton acceptor role is filled by aspartate 166. The APH signature appears at 180-203 (LYLIDWDGAMIADPAMDLGPLLYH).

The protein belongs to the aminoglycoside phosphotransferase family. Monomer in solution. Interacts with DnaA (via domains I (1-82) and III (111-326)). Interacts with DnaB. Interacts with FtsZ.

The protein localises to the cytoplasm. The enzyme catalyses D-ribose + ATP = D-ribose 5-phosphate + ADP + H(+). It catalyses the reaction 2-deoxy-D-ribose + ATP = 2-deoxy-D-ribose 5-phosphate + ADP + H(+). Its activity is regulated as follows. Activated by D-ribose and 2-deoxy-D-ribose. Slightly activated by kanamycin and gentamicin. Functionally, plays a role in cell cycle regulation and chromosome integrity. Activates DnaA-dependent chromosomal DNA replication initiation ensuring that the chromosome is replicated at the right time during the cell cycle. May regulate replication initiation through phosphorylation of a possible second messenger or metabolite, and by interacting with replication initiation proteins. Has ATPase activity with D-ribose and 2-deoxy-D-ribose in vitro, but not with choline. Involved in DNA damage response. The polypeptide is Cell cycle regulator CcrZ (Bacillus subtilis (strain 168)).